The sequence spans 558 residues: MRAQPDLKPRSRDVTDGLERAAARGMLRAVGMTDADWEKPQIGVASSWNEITPCNLSLDRLAQAAKEGVHAAGGYPLEFATISVSDGISMGHEGMHFSLISREVIADSVETVFMAERFDGAVLLAGCDKSEPGMLMAAARLDLAAVFLYAGSTLPGKLGDRDINIVDAFEAVGGCLRGLVSREEVDAIERNFCPVEGACAGMFTANTMASAAEALGMSLPGSASPPAPDRRRDGFARASGEAVVNLLRRGITARDIMTREAFENAIAVVMALGGSTNAVLHLLAIAREANVDLAIDDFNRIGDRVPHLADVKPFGRYVMSDVDRVGGVPVVMKALLDAGLLHGDCLTVTGKTVAENLADITPPDPDGKVIHALTQPIHRTGGLAILRGSLAPDGAVVKTAGLESTFFEGTARVFDGEEAAMRAVPELRPGDVVVIRYEGPKGGPGMREMLAVTGAIKGAGLGKDVLLVTDGRFSGGTTGFCVAHVAPEAVDGGPIAFVRDGDRIRLDAQARTLDLLVDADELAKRRADWQPPPPRYTTGVAAKYVKLVGSASEGAICR.

Cys54 is a [2Fe-2S] cluster binding site. Asp86 contacts Mg(2+). Cys127 lines the [2Fe-2S] cluster pocket. Residues Asp128 and Lys129 each contribute to the Mg(2+) site. N6-carboxylysine is present on Lys129. Cys199 serves as a coordination point for [2Fe-2S] cluster. Glu448 lines the Mg(2+) pocket. The active-site Proton acceptor is the Ser474.

This sequence belongs to the IlvD/Edd family. As to quaternary structure, homodimer. [2Fe-2S] cluster is required as a cofactor. Mg(2+) serves as cofactor.

It carries out the reaction (2R)-2,3-dihydroxy-3-methylbutanoate = 3-methyl-2-oxobutanoate + H2O. It catalyses the reaction (2R,3R)-2,3-dihydroxy-3-methylpentanoate = (S)-3-methyl-2-oxopentanoate + H2O. It functions in the pathway amino-acid biosynthesis; L-isoleucine biosynthesis; L-isoleucine from 2-oxobutanoate: step 3/4. The protein operates within amino-acid biosynthesis; L-valine biosynthesis; L-valine from pyruvate: step 3/4. In terms of biological role, functions in the biosynthesis of branched-chain amino acids. Catalyzes the dehydration of (2R,3R)-2,3-dihydroxy-3-methylpentanoate (2,3-dihydroxy-3-methylvalerate) into 2-oxo-3-methylpentanoate (2-oxo-3-methylvalerate) and of (2R)-2,3-dihydroxy-3-methylbutanoate (2,3-dihydroxyisovalerate) into 2-oxo-3-methylbutanoate (2-oxoisovalerate), the penultimate precursor to L-isoleucine and L-valine, respectively. The polypeptide is Dihydroxy-acid dehydratase (Acidothermus cellulolyticus (strain ATCC 43068 / DSM 8971 / 11B)).